A 227-amino-acid polypeptide reads, in one-letter code: Venom allergen 5.01 (227 aa).

The first 23 residues, 1-23 (MEIGGLVYLILIITIINLSFGET), serve as a signal peptide directing secretion. 4 cysteine pairs are disulfide-bonded: cysteine 27-cysteine 39, cysteine 31-cysteine 124, cysteine 49-cysteine 117, and cysteine 193-cysteine 210. The SCP domain maps to 68–212 (LKRHNDFRQN…WYTHYLVCNY (145 aa)).

Belongs to the CRISP family. Venom allergen 5-like subfamily. In terms of tissue distribution, expressed by the venom gland.

The protein localises to the secreted. In Dolichovespula maculata (Bald-faced hornet), this protein is Venom allergen 5.01.